Consider the following 200-residue polypeptide: MARCKS-related protein (200 aa).

The tract at residues 1–200 is disordered; the sequence is MGSQSSKAPR…PTPASAEQNE (200 aa). Glycine 2 carries N-myristoyl glycine lipidation. A Phosphothreonine modification is found at threonine 14. Low complexity predominate over residues 16 to 26; the sequence is EEAAGASPAKA. Phosphoserine is present on residues serine 22, serine 36, and serine 48. Over residues 53-64 the composition is skewed to low complexity; it reads GTDEAAGATGDA. Residue serine 71 is modified to Phosphoserine. The segment covering 74 to 85 has biased composition (basic and acidic residues); it reads AEAKGEVAPKET. Threonine 85 is subject to Phosphothreonine. The segment covering 86-98 has biased composition (basic residues); sequence PKKKKKFSFKKPF. Positions 87-110 are effector domain involved in lipid-binding and calmodulin-binding; it reads KKKKKFSFKKPFKLSGLSFKRNRK. Phosphoserine; by PKC is present on residues serine 93, serine 101, and serine 104. At serine 119 the chain carries Phosphoserine. Residue serine 120 is modified to Phosphoserine; by MAPK8. 2 positions are modified to phosphoserine: serine 132 and serine 135. Threonine 148 carries the phosphothreonine; by MAPK8 modification. 3 positions are modified to phosphoserine: serine 151, serine 162, and serine 165. Residues 156 to 165 are compositionally biased toward low complexity; that stretch reads AKGAEASAAS. Threonine 170 is subject to Phosphothreonine. Residues 178–200 show a composition bias toward low complexity; the sequence is AAEPSTPSGPESGPTPASAEQNE. Threonine 183 is subject to Phosphothreonine; by MAPK8. Threonine 192 is subject to Phosphothreonine.

The protein belongs to the MARCKS family. Binds to filamentous actin (F-actin), but not to monomeric G-actin, independently of its phosphorylation status. Interacts with calmodulin. In terms of processing, phosphorylated. Phosphorylation at Ser-120 and Thr-183 is non-redundantly catalyzed by MAPK8 in vivo. Phosphorylation at Thr-148 is preferentially catalyzed by MAPK8 in vivo, but this modification can also be catalyzed by other kinases in the absence of MAPK8. May be phosphorylated by protein kinase C, which disrupts the interaction with calmodulin. Expressed at high levels in brain cortex and hippocampus, including dentate gyrus, anterior olfactory nucleus, primary olfactory cortex, entorhinal cortex, medial preoptic area and dorsomedial hypothalamic nucleus (at protein level). Expressed in neuronal cells (at protein level). Detected in the retina. Strongly expressed in testis and uterus; expressed at lower levels in cerebellum, cerebrum, adipose tissue, spleen, kidney, thyroid, liver, lung, skeletal muscle and heart. Detected in T-cells and B-cells.

It is found in the cytoplasm. Its subcellular location is the cytoskeleton. It localises to the cell membrane. Involved in the control of cell movement by regulating actin cytoskeleton homeostasis and filopodium and lamellipodium formation. When unphosphorylated, induces cell migration. When phosphorylated by MAPK8, induces actin bundles formation and stabilization, thereby reducing actin plasticity, hence restricting cell movement, including neuronal migration. May be involved in coupling the protein kinase C and calmodulin signal transduction systems. The protein is MARCKS-related protein (Marcksl1) of Mus musculus (Mouse).